A 601-amino-acid polypeptide reads, in one-letter code: DNA replication licensing factor MCM3 (601 aa).

Residues 180-386 (PINLLSKSIA…LDRRLSQHVL (207 aa)) enclose the MCM domain. Position 229 to 236 (229 to 236 (GDPSTAKS)) interacts with ATP. The Arginine finger motif lies at 361-364 (SRFD).

Belongs to the MCM family. In terms of assembly, component of the MCM2-7 complex.

The protein resides in the nucleus. The protein localises to the chromosome. Its subcellular location is the nucleoplasm. The catalysed reaction is ATP + H2O = ADP + phosphate + H(+). Its function is as follows. Acts as a component of the MCM2-7 complex (MCM complex) which is the replicative helicase essential for DNA replication initiation and elongation in eukaryotic cells. Required for DNA replication and cell proliferation. The active ATPase sites in the MCM2-7 ring are formed through the interaction surfaces of two neighboring subunits such that a critical structure of a conserved arginine finger motif is provided in trans relative to the ATP-binding site of the Walker A box of the adjacent subunit. The sequence is that of DNA replication licensing factor MCM3 from Entamoeba histolytica (strain ATCC 30459 / HM-1:IMSS / ABRM).